Reading from the N-terminus, the 115-residue chain is MPRSVPSVASRERRKKILKLAKGYFGRRKNVWTVAKNAVERGKVFAYIGRKQKKRHFRGLWIQRINAGTRQHGLSYSQFIGALDKANIKLNRKVLADLAMNDPEAFKAVVEKVKK.

The protein belongs to the bacterial ribosomal protein bL20 family.

Functionally, binds directly to 23S ribosomal RNA and is necessary for the in vitro assembly process of the 50S ribosomal subunit. It is not involved in the protein synthesizing functions of that subunit. This is Large ribosomal subunit protein bL20 from Cytophaga hutchinsonii (strain ATCC 33406 / DSM 1761 / CIP 103989 / NBRC 15051 / NCIMB 9469 / D465).